A 159-amino-acid polypeptide reads, in one-letter code: Phosphopantetheine adenylyltransferase (159 aa).

Threonine 10 is a binding site for substrate. ATP contacts are provided by residues 10-11 (TF) and histidine 18. Residues lysine 42, leucine 74, and arginine 88 each coordinate substrate. ATP-binding positions include 89–91 (GLR), glutamate 99, and 124–130 (NAFISSS).

Belongs to the bacterial CoaD family. As to quaternary structure, homohexamer. Requires Mg(2+) as cofactor.

Its subcellular location is the cytoplasm. It catalyses the reaction (R)-4'-phosphopantetheine + ATP + H(+) = 3'-dephospho-CoA + diphosphate. Its pathway is cofactor biosynthesis; coenzyme A biosynthesis; CoA from (R)-pantothenate: step 4/5. Reversibly transfers an adenylyl group from ATP to 4'-phosphopantetheine, yielding dephospho-CoA (dPCoA) and pyrophosphate. The polypeptide is Phosphopantetheine adenylyltransferase (Campylobacter fetus subsp. fetus (strain 82-40)).